Consider the following 409-residue polypeptide: Elongation factor Tu (409 aa).

The region spanning 10-214 (KPHVNIGTIG…AVDSYIPDPE (205 aa)) is the tr-type G domain. A G1 region spans residues 19–26 (GHVDHGKT). 19 to 26 (GHVDHGKT) serves as a coordination point for GTP. T26 contacts Mg(2+). The G2 stretch occupies residues 60-64 (GITIN). A G3 region spans residues 81–84 (DCPG). GTP contacts are provided by residues 81 to 85 (DCPGH) and 136 to 139 (NKED). Residues 136 to 139 (NKED) form a G4 region. The G5 stretch occupies residues 174–176 (SGL).

The protein belongs to the TRAFAC class translation factor GTPase superfamily. Classic translation factor GTPase family. EF-Tu/EF-1A subfamily. In terms of assembly, monomer.

It localises to the cytoplasm. The catalysed reaction is GTP + H2O = GDP + phosphate + H(+). Functionally, GTP hydrolase that promotes the GTP-dependent binding of aminoacyl-tRNA to the A-site of ribosomes during protein biosynthesis. The protein is Elongation factor Tu of Trichormus variabilis (strain ATCC 29413 / PCC 7937) (Anabaena variabilis).